A 365-amino-acid polypeptide reads, in one-letter code: Uroporphyrinogen decarboxylase (365 aa).

Substrate-binding positions include 27–31 (RQAGR), aspartate 77, tyrosine 154, serine 209, and histidine 327.

Belongs to the uroporphyrinogen decarboxylase family. In terms of assembly, homodimer.

It is found in the cytoplasm. The catalysed reaction is uroporphyrinogen III + 4 H(+) = coproporphyrinogen III + 4 CO2. Its pathway is porphyrin-containing compound metabolism; protoporphyrin-IX biosynthesis; coproporphyrinogen-III from 5-aminolevulinate: step 4/4. Catalyzes the decarboxylation of four acetate groups of uroporphyrinogen-III to yield coproporphyrinogen-III. This chain is Uroporphyrinogen decarboxylase, found in Alkalilimnicola ehrlichii (strain ATCC BAA-1101 / DSM 17681 / MLHE-1).